The sequence spans 492 residues: Probable malate:quinone oxidoreductase 1 (492 aa).

This sequence belongs to the MQO family. FAD serves as cofactor.

The catalysed reaction is (S)-malate + a quinone = a quinol + oxaloacetate. It participates in carbohydrate metabolism; tricarboxylic acid cycle; oxaloacetate from (S)-malate (quinone route): step 1/1. The polypeptide is Probable malate:quinone oxidoreductase 1 (Staphylococcus aureus (strain MRSA252)).